The sequence spans 337 residues: Glyceraldehyde-3-phosphate dehydrogenase 3 (337 aa).

NAD(+) contacts are provided by residues 12 to 13 (RM) and lysine 80. D-glyceraldehyde 3-phosphate-binding positions include 152–154 (SCT) and threonine 183. The active-site Nucleophile is the cysteine 153. Asparagine 184 lines the NAD(+) pocket. Residues arginine 198, 211-212 (TG), and arginine 234 each bind D-glyceraldehyde 3-phosphate. Asparagine 317 contacts NAD(+).

Belongs to the glyceraldehyde-3-phosphate dehydrogenase family. Homotetramer.

The protein localises to the cytoplasm. It carries out the reaction D-glyceraldehyde 3-phosphate + phosphate + NAD(+) = (2R)-3-phospho-glyceroyl phosphate + NADH + H(+). It functions in the pathway carbohydrate degradation; glycolysis; pyruvate from D-glyceraldehyde 3-phosphate: step 1/5. It participates in carbohydrate biosynthesis; gluconeogenesis. Catalyzes the oxidative phosphorylation of glyceraldehyde 3-phosphate (G3P) to 1,3-bisphosphoglycerate (BPG) using the cofactor NAD. The first reaction step involves the formation of a hemiacetal intermediate between G3P and a cysteine residue, and this hemiacetal intermediate is then oxidized to a thioester, with concomitant reduction of NAD to NADH. The reduced NADH is then exchanged with the second NAD, and the thioester is attacked by a nucleophilic inorganic phosphate to produce BPG. The chain is Glyceraldehyde-3-phosphate dehydrogenase 3 (gap3) from Nostoc sp. (strain PCC 7120 / SAG 25.82 / UTEX 2576).